Here is a 103-residue protein sequence, read N- to C-terminus: Integration host factor subunit alpha (103 aa).

The disordered stretch occupies residues 55 to 74 (CREKPQRPGRNPKTGEEMPI).

The protein belongs to the bacterial histone-like protein family. As to quaternary structure, heterodimer of an alpha and a beta chain.

Its function is as follows. This protein is one of the two subunits of integration host factor, a specific DNA-binding protein that functions in genetic recombination as well as in transcriptional and translational control. The chain is Integration host factor subunit alpha from Thiobacillus denitrificans (strain ATCC 25259 / T1).